Consider the following 161-residue polypeptide: Endoribonuclease YbeY (161 aa).

Residues histidine 127, histidine 131, and histidine 137 each coordinate Zn(2+).

The protein belongs to the endoribonuclease YbeY family. It depends on Zn(2+) as a cofactor.

It localises to the cytoplasm. Functionally, single strand-specific metallo-endoribonuclease involved in late-stage 70S ribosome quality control and in maturation of the 3' terminus of the 16S rRNA. The protein is Endoribonuclease YbeY of Listeria innocua serovar 6a (strain ATCC BAA-680 / CLIP 11262).